We begin with the raw amino-acid sequence, 80 residues long: Probable small nuclear ribonucleoprotein G (80 aa).

Residues 5-76 enclose the Sm domain; sequence GQPPDLKKYM…IVTVEALEPV (72 aa).

Belongs to the snRNP Sm proteins family.

It localises to the nucleus. In terms of biological role, probable common Sm protein, is found in U1 and U2 snRNPs and may be part of the spliceosome. The polypeptide is Probable small nuclear ribonucleoprotein G (Arabidopsis thaliana (Mouse-ear cress)).